The chain runs to 224 residues: Ethylene-inducing xylanase 5 (224 aa).

Residues 1-16 form the signal peptide; the sequence is MLKSLVVLLLTSRVIA. One can recognise a GH11 domain in the interval 32-218; the sequence is QATPNSQGTH…SSGFAEMTVA (187 aa). Residue N88 is glycosylated (N-linked (GlcNAc...) asparagine). E117 (nucleophile) is an active-site residue. The Proton donor role is filled by E205.

Belongs to the glycosyl hydrolase 11 (cellulase G) family.

The catalysed reaction is Endohydrolysis of (1-&gt;4)-beta-D-xylosidic linkages in xylans.. The protein operates within glycan degradation; xylan degradation. Its function is as follows. Endo-1,4-beta-xylanase involved in the hydrolysis of xylan, a major structural heterogeneous polysaccharide found in plant biomass representing the second most abundant polysaccharide in the biosphere, after cellulose. May act as an elicitor of plant defense responses in certain plants but does not exhibit any cell death when transiently expressed in N.benthamiana. The chain is Ethylene-inducing xylanase 5 from Verticillium dahliae (strain VdLs.17 / ATCC MYA-4575 / FGSC 10137) (Verticillium wilt).